The chain runs to 247 residues: PF03932 family protein CutC (247 aa).

It belongs to the CutC family.

The protein localises to the cytoplasm. The polypeptide is PF03932 family protein CutC (Vibrio campbellii (strain ATCC BAA-1116)).